Consider the following 315-residue polypeptide: Methionyl-tRNA formyltransferase (315 aa).

111–114 (SLLP) lines the (6S)-5,6,7,8-tetrahydrofolate pocket.

Belongs to the Fmt family.

It carries out the reaction L-methionyl-tRNA(fMet) + (6R)-10-formyltetrahydrofolate = N-formyl-L-methionyl-tRNA(fMet) + (6S)-5,6,7,8-tetrahydrofolate + H(+). Attaches a formyl group to the free amino group of methionyl-tRNA(fMet). The formyl group appears to play a dual role in the initiator identity of N-formylmethionyl-tRNA by promoting its recognition by IF2 and preventing the misappropriation of this tRNA by the elongation apparatus. The protein is Methionyl-tRNA formyltransferase of Chlorobium phaeobacteroides (strain DSM 266 / SMG 266 / 2430).